The following is a 491-amino-acid chain: Probable protein phosphatase 2C 52 (491 aa).

Residues 1–11 are compositionally biased toward basic and acidic residues; that stretch reads MVYDGAVKDQE. The segment at 1-211 is disordered; the sequence is MVYDGAVKDQ…REREKERERV (211 aa). The segment covering 12-54 has biased composition (low complexity); sequence SSANPASASAALSEASAAASEVTAAAAAGAGAGAAEEGAAVSG. Positions 66–78 are enriched in basic residues; sequence GVRHPLKHRRFRA. Residues 95 to 105 show a composition bias toward acidic residues; it reads VADEEASEVEQ. Positions 187–211 are enriched in basic and acidic residues; it reads VEEKKHKDQENKHKEREREKERERV. Residues 229 to 475 form the PPM-type phosphatase domain; sequence SCGYSSFRGK…DNITCIVVKF (247 aa). 4 residues coordinate Mn(2+): aspartate 265, glycine 266, aspartate 427, and aspartate 466.

This sequence belongs to the PP2C family. It depends on Mg(2+) as a cofactor. Mn(2+) serves as cofactor.

It carries out the reaction O-phospho-L-seryl-[protein] + H2O = L-seryl-[protein] + phosphate. The catalysed reaction is O-phospho-L-threonyl-[protein] + H2O = L-threonyl-[protein] + phosphate. This chain is Probable protein phosphatase 2C 52, found in Oryza sativa subsp. japonica (Rice).